The chain runs to 180 residues: O-acetyl-ADP-ribose deacetylase (180 aa).

The region spanning 1 to 175 (MSGRINVVQG…LYQRLLGQYD (175 aa)) is the Macro domain. Residues 11–12 (DI), N25, 33–35 (GVD), and 122–126 (STGIY) each bind substrate. D35 acts as the Proton acceptor in catalysis.

This sequence belongs to the MacroD-type family. YmdB subfamily. As to quaternary structure, homodimer. Interacts with RNase III.

The catalysed reaction is 3''-O-acetyl-ADP-D-ribose + H2O = ADP-D-ribose + acetate + H(+). It catalyses the reaction 2''-O-acetyl-ADP-D-ribose + H2O = ADP-D-ribose + acetate + H(+). Deacetylates O-acetyl-ADP ribose to yield ADP-ribose and free acetate. Down-regulates ribonuclease 3 (RNase III) activity. Acts by interacting directly with the region of the ribonuclease that is required for dimerization/activation. The protein is O-acetyl-ADP-ribose deacetylase of Cronobacter sakazakii (strain ATCC BAA-894) (Enterobacter sakazakii).